A 120-amino-acid polypeptide reads, in one-letter code: Large ribosomal subunit protein uL18 (120 aa).

The interval 1 to 22 is disordered; sequence MKVDRKTATHRRHQRIRRKIAG. Residues 8-20 are compositionally biased toward basic residues; it reads ATHRRHQRIRRKI.

It belongs to the universal ribosomal protein uL18 family. Part of the 50S ribosomal subunit; part of the 5S rRNA/L5/L18/L25 subcomplex. Contacts the 5S and 23S rRNAs.

Its function is as follows. This is one of the proteins that bind and probably mediate the attachment of the 5S RNA into the large ribosomal subunit, where it forms part of the central protuberance. The polypeptide is Large ribosomal subunit protein uL18 (Gloeobacter violaceus (strain ATCC 29082 / PCC 7421)).